The sequence spans 230 residues: Protein CWC15 homolog B (230 aa).

The tract at residues 1-126 (MTTAARPTFE…DEDSDDDTAA (126 aa)) is disordered. Positions 22–34 (DLSQLSKQYSSRD) are enriched in polar residues. Basic and acidic residues predominate over residues 52–84 (EEVRSRDFRRELEERERVAVRDKNRDRPTREHT). A compositionally biased stretch (acidic residues) spans 102–124 (DADDPLTDEDADEDSDEDSDDDT). Positions 121 to 165 (DDDTAALLAELEKIKKERAEEQVRKELEQKAEEERIRMENILSGN) form a coiled coil.

The protein belongs to the CWC15 family. Identified in the spliceosome C complex. Component of the minor spliceosome, which splices U12-type introns.

It localises to the nucleus. Involved in pre-mRNA splicing as component of the spliceosome. This Xenopus laevis (African clawed frog) protein is Protein CWC15 homolog B (cwc15-b).